The primary structure comprises 352 residues: Maleylacetate reductase (352 aa).

This sequence belongs to the iron-containing alcohol dehydrogenase family.

It carries out the reaction 3-oxoadipate + NAD(+) = maleylacetate + NADH + H(+). It catalyses the reaction 3-oxoadipate + NADP(+) = maleylacetate + NADPH + H(+). It functions in the pathway xenobiotic degradation; (2,4,5-trichlorophenoxy)acetate degradation. The protein is Maleylacetate reductase (tftE) of Burkholderia cepacia (Pseudomonas cepacia).